We begin with the raw amino-acid sequence, 215 residues long: MCWGKHWPRPEGRNLACSKGSPGWRTAGQGSGSYGAATLGKGTEQRGVGALRRGLLSFTCFCLSNWTSGAGFSEMGRSRFEEGRLGYSSDVLSARPTMSPTEMLRSRALNLGAATVLRRHRAPQGTSSYQEGRRAHEATSAESDDDNGVQVLASLAVSCAQHSRHKDPVGTQLQQACAQVPTSRAPLWPCPSHRLMHSTDGPLDPEPLSTLLPAA.

The tract at residues 120–147 (HRAPQGTSSYQEGRRAHEATSAESDDDN) is disordered.

This is an uncharacterized protein from Homo sapiens (Human).